The following is a 300-amino-acid chain: Protein THYLAKOID FORMATION 1, chloroplastic (300 aa).

Residues 1–67 (MAATAISSLS…SNVTADVPPV (67 aa)) constitute a chloroplast transit peptide. Residues 68–196 (SETKSKFLKA…IAGRAGSKEG (129 aa)) lie on the Chloroplast intermembrane side of the membrane. A helical membrane pass occupies residues 197–219 (FSYSRFFAVGLFRLLELASATDP). The Cytoplasmic segment spans residues 220 to 300 (TVLDKLCASL…NPSFLVERKS (81 aa)). A coiled-coil region spans residues 239 to 268 (DLDVYRNLLSKLVQAKELLKEYVEREKKKQ).

This sequence belongs to the THF1 family. Interacts with GPA1. Ubiquitous. Present at higher level in hypocotyls (at protein level). Ubiquitously expressed in all organs, in roots of both light-grown and dark-grown seedlings. Highly expressed in the root apical meristems.

It is found in the plastid. It localises to the chloroplast outer membrane. The protein localises to the chloroplast stroma. Functionally, involved in a dynamic process of vesicle-mediated thylakoid membrane biogenesis. Required for the normal organization of vesicles into mature thylakoid stacks and ultimately for leaf development. Also involved in a sugar-signaling mechanism in roots by mediating signaling between the plasma membrane and the plastid. Probably acts downstream of the plasma membrane-delimited heterotrimeric G-protein GPA1 in a D-glucose signaling pathway. This is Protein THYLAKOID FORMATION 1, chloroplastic (THF1) from Arabidopsis thaliana (Mouse-ear cress).